A 311-amino-acid polypeptide reads, in one-letter code: Fluoride export protein 1 (311 aa).

The Cytoplasmic segment spans residues 1–6; it reads MLLTQS. The helical transmembrane segment at 7-25 threads the bilayer; that stretch reads YFCIMSMLGTLARLGLTAL. Residues 26 to 29 lie on the Extracellular side of the membrane; it reads NTYP. The chain crosses the membrane as a helical span at residues 30-50; it reads GAPFSGLLWVQFVGCVIMGFC. Topologically, residues 51–65 are cytoplasmic; sequence QTESVFFPRPKHNAT. The chain crosses the membrane as a helical span at residues 66 to 86; sequence FLLAITTGFCGSLTTFSSWML. Residues 87 to 106 lie on the Extracellular side of the membrane; sequence QMFTGMANLDPFERRGRGYS. A helical transmembrane segment spans residues 107-127; sequence FLSVVSDFMVTMCIAMSSLIW. The Cytoplasmic portion of the chain corresponds to 128 to 154; that stretch reads GKQIGKTTGQWRIGKVAFAWPIPAHTH. The chain crosses the membrane as a helical span at residues 155–175; that stretch reads IVVRVLLLLLSICFFVGAAFY. The Extracellular portion of the chain corresponds to 176-186; that stretch reads TAYTTNVTHRG. N-linked (GlcNAc...) asparagine glycosylation occurs at Asn-181. The chain crosses the membrane as a helical span at residues 187–207; the sequence is IGFSLIFSPFAALTRLYLARF. At 208–212 the chain is on the cytoplasmic side; that stretch reads LNSPQ. A helical membrane pass occupies residues 213 to 233; it reads YFIPYGTLCANVFATLLLSIM. The Extracellular portion of the chain corresponds to 234–250; that stretch reads YMIPQITHCTPVSRSVM. The helical transmembrane segment at 251–268 threads the bilayer; that stretch reads YGIQNGFCAVLSTLSTFS. Residues 269–278 lie on the Cytoplasmic side of the membrane; sequence NELHTMPIKR. A helical transmembrane segment spans residues 279–299; it reads AYIYCIISVAISFSICVIVDG. Over 300–311 the chain is Extracellular; sequence ATAWGHGYTEKY.

This sequence belongs to the fluoride channel Fluc/FEX (TC 1.A.43) family.

It is found in the cell membrane. It catalyses the reaction fluoride(in) = fluoride(out). Fluoride channel required for the rapid expulsion of cytoplasmic fluoride. This chain is Fluoride export protein 1 (fex1), found in Schizosaccharomyces pombe (strain 972 / ATCC 24843) (Fission yeast).